The primary structure comprises 346 residues: Glycerol-3-phosphate dehydrogenase [NAD(P)+] (346 aa).

Residues serine 15, tryptophan 16, arginine 36, and lysine 110 each contribute to the NADPH site. Sn-glycerol 3-phosphate is bound by residues lysine 110, glycine 139, and serine 141. An NADPH-binding site is contributed by alanine 143. Residues lysine 194, aspartate 247, serine 257, arginine 258, and asparagine 259 each contribute to the sn-glycerol 3-phosphate site. Catalysis depends on lysine 194, which acts as the Proton acceptor. Arginine 258 is a binding site for NADPH. Valine 282 and glutamate 284 together coordinate NADPH.

Belongs to the NAD-dependent glycerol-3-phosphate dehydrogenase family.

Its subcellular location is the cytoplasm. It carries out the reaction sn-glycerol 3-phosphate + NAD(+) = dihydroxyacetone phosphate + NADH + H(+). It catalyses the reaction sn-glycerol 3-phosphate + NADP(+) = dihydroxyacetone phosphate + NADPH + H(+). It functions in the pathway membrane lipid metabolism; glycerophospholipid metabolism. Catalyzes the reduction of the glycolytic intermediate dihydroxyacetone phosphate (DHAP) to sn-glycerol 3-phosphate (G3P), the key precursor for phospholipid synthesis. The polypeptide is Glycerol-3-phosphate dehydrogenase [NAD(P)+] (Xylella fastidiosa (strain Temecula1 / ATCC 700964)).